The chain runs to 126 residues: Topoisomerase I damage affected protein 8 (126 aa).

Positions 1–110 constitute a PA14 domain; the sequence is MTGYFLPPQT…VTTVSDDFAG (110 aa).

Belongs to the flocculin family.

The protein is Topoisomerase I damage affected protein 8 (TDA8) of Saccharomyces cerevisiae (strain ATCC 204508 / S288c) (Baker's yeast).